We begin with the raw amino-acid sequence, 497 residues long: Carboxypeptidase Y homolog ARB_02032 (497 aa).

A signal peptide spans 1-18; it reads MRFTQIVAAALCLGATEA. The N-linked (GlcNAc...) asparagine glycan is linked to Asn-88. Ser-204 is a catalytic residue. Residues Asn-263 and Asn-393 are each glycosylated (N-linked (GlcNAc...) asparagine). Asp-403 is a catalytic residue. N-linked (GlcNAc...) asparagine glycosylation is present at Asn-417. Residue His-469 is part of the active site.

The protein belongs to the peptidase S10 family.

The protein resides in the secreted. It carries out the reaction Release of a C-terminal amino acid with broad specificity.. In terms of biological role, involved in degradation of small peptides. This Arthroderma benhamiae (strain ATCC MYA-4681 / CBS 112371) (Trichophyton mentagrophytes) protein is Carboxypeptidase Y homolog ARB_02032.